The sequence spans 543 residues: Ipecac alkaloid beta-glucosidase 2 (543 aa).

A beta-D-glucoside contacts are provided by residues Gln36, His140, 185–186 (NE), Tyr350, Glu422, Trp471, and Phe487. Glu186 serves as the catalytic Proton donor. Residue Glu422 is the Nucleophile of the active site.

Belongs to the glycosyl hydrolase 1 family.

The protein resides in the cytoplasm. Its subcellular location is the cytosol. The catalysed reaction is deacetylipecoside + H2O = deacetylipecoside aglycone + D-glucose. It catalyses the reaction deacetylisoipecoside + H2O = deacetylisoipecoside aglycone + D-glucose. Its pathway is alkaloid biosynthesis. Beta-glucosidase catalyzing deglucosylation on N-deacetylisoipecoside and N-deacetylipecoside. The chain is Ipecac alkaloid beta-glucosidase 2 from Carapichea ipecacuanha (Ipecac).